A 98-amino-acid polypeptide reads, in one-letter code: Sm-like protein LSM8 (98 aa).

The Sm domain occupies A2–E78.

It belongs to the snRNP Sm proteins family. As to quaternary structure, component of the heptameric LSM2-LSM8 complex that forms a seven-membered ring structure with a donut shape. The LSM subunits are arranged in the order LSM8, LSM2, LSM3, LSM6, LSM5, LSM7 and LSM4. LSM8 subunit interacts only with its two neighboring subunits, LSM2 and LSM4. Interacts with the prefoldin co-chaperone subunits PFD1, PFD2, PFD3, PFD4, PFD5 and PFD6. In terms of tissue distribution, expressed in roots, leaves, stems, flowers and siliques.

The protein resides in the nucleus. Functionally, component of the nuclear LSM2-LSM8 complex which is involved splicing nuclear mRNAs. LSM2-LSM8 binds directly to the U6 small nuclear RNAs (snRNAs). LSM8 is essential for the formation of the nuclear LSM2-LSM8 complex involved in the accurate splicing of selected development-related mRNAs through the stabilization of the spliceosomal U6 snRNA. Plays a critical role in the regulation of development-related gene expression. The polypeptide is Sm-like protein LSM8 (Arabidopsis thaliana (Mouse-ear cress)).